Here is a 407-residue protein sequence, read N- to C-terminus: 12S rRNA N(4)-cytidine methyltransferase METTL15 (407 aa).

S-adenosyl-L-methionine-binding positions include 100 to 102 (GGH), aspartate 119, phenylalanine 146, aspartate 169, and glutamine 176. Serine 358 is modified (phosphoserine).

It belongs to the methyltransferase superfamily. RsmH family.

It localises to the mitochondrion matrix. It catalyses the reaction cytidine(839) in 12S rRNA + S-adenosyl-L-methionine = N(4)-methylcytidine(839) in 12S rRNA + S-adenosyl-L-homocysteine + H(+). Its function is as follows. N4-methylcytidine (m4C) methyltransferase responsible for the methylation of position C839 in mitochondrial 12S rRNA. Involved in the stabilization of 12S rRNA folding, therefore facilitating the assembly of the mitochondrial small ribosomal subunits. The sequence is that of 12S rRNA N(4)-cytidine methyltransferase METTL15 from Homo sapiens (Human).